Reading from the N-terminus, the 194-residue chain is Large ribosomal subunit protein eL15 (194 aa).

The tract at residues 161 to 194 (GLTSAGKKGRGLMYKGKGAEKARPSVRANGKKTK) is disordered.

It belongs to the eukaryotic ribosomal protein eL15 family.

The polypeptide is Large ribosomal subunit protein eL15 (Methanococcus maripaludis (strain C5 / ATCC BAA-1333)).